The primary structure comprises 466 residues: Adenosylhomocysteinase (466 aa).

The substrate site is built by threonine 57, aspartate 132, and glutamate 192. 193 to 195 (TTT) provides a ligand contact to NAD(+). Residues lysine 222 and aspartate 226 each coordinate substrate. NAD(+)-binding positions include asparagine 227, 256-261 (GYGDVG), glutamate 279, asparagine 314, 335-337 (IGH), and asparagine 380.

Belongs to the adenosylhomocysteinase family. NAD(+) serves as cofactor.

Its subcellular location is the cytoplasm. The catalysed reaction is S-adenosyl-L-homocysteine + H2O = L-homocysteine + adenosine. Its pathway is amino-acid biosynthesis; L-homocysteine biosynthesis; L-homocysteine from S-adenosyl-L-homocysteine: step 1/1. Functionally, may play a key role in the regulation of the intracellular concentration of adenosylhomocysteine. This chain is Adenosylhomocysteinase, found in Brucella anthropi (strain ATCC 49188 / DSM 6882 / CCUG 24695 / JCM 21032 / LMG 3331 / NBRC 15819 / NCTC 12168 / Alc 37) (Ochrobactrum anthropi).